Here is a 337-residue protein sequence, read N- to C-terminus: Tryptophan--tRNA ligase (337 aa).

ATP contacts are provided by residues 11 to 13 (QPT) and 19 to 20 (GN). The short motif at 12–20 (PTGALHLGN) is the 'HIGH' region element. Residue D135 coordinates L-tryptophan. Residues 147–149 (GED), V191, and 200–204 (KMSKS) contribute to the ATP site. The 'KMSKS' region signature appears at 200–204 (KMSKS).

This sequence belongs to the class-I aminoacyl-tRNA synthetase family. Homodimer.

It is found in the cytoplasm. It catalyses the reaction tRNA(Trp) + L-tryptophan + ATP = L-tryptophyl-tRNA(Trp) + AMP + diphosphate + H(+). In terms of biological role, catalyzes the attachment of tryptophan to tRNA(Trp). The chain is Tryptophan--tRNA ligase from Parasynechococcus marenigrum (strain WH8102).